The chain runs to 720 residues: Fatty acid CoA ligase Acsl3 (720 aa).

A helical; Signal-anchor for type III membrane protein membrane pass occupies residues 21–41; it reads ILLYFIHFLISLYTILTYIPF. Topologically, residues 42 to 720 are cytoplasmic; that stretch reads YFFSESRQEK…ADIERMYGRK (679 aa). Phosphoserine is present on Ser-683.

Belongs to the ATP-dependent AMP-binding enzyme family. Requires Mg(2+) as cofactor.

Its subcellular location is the mitochondrion outer membrane. The protein localises to the peroxisome membrane. It localises to the microsome membrane. The protein resides in the endoplasmic reticulum membrane. It carries out the reaction a long-chain fatty acid + ATP + CoA = a long-chain fatty acyl-CoA + AMP + diphosphate. The enzyme catalyses (5Z,8Z,11Z,14Z)-eicosatetraenoate + ATP + CoA = (5Z,8Z,11Z,14Z)-eicosatetraenoyl-CoA + AMP + diphosphate. The catalysed reaction is (E)-hexadec-2-enoate + ATP + CoA = (2E)-hexadecenoyl-CoA + AMP + diphosphate. It catalyses the reaction 15-hydroxy-(5Z,8Z,11Z,13E)-eicosatetraenoate + ATP + CoA = 15-hydroxy-(5Z,8Z,11Z,13E)-eicosatetraenoyl-CoA + AMP + diphosphate. It carries out the reaction 12-hydroxy-(5Z,8Z,10E,14Z)-eicosatetraenoate + ATP + CoA = 12-hydroxy-(5Z,8Z,10E,14Z)-eicosatetraenoyl-CoA + AMP + diphosphate. The enzyme catalyses 5-hydroxy-(6E,8Z,11Z,14Z)-eicosatetraenoate + ATP + CoA = 5-hydroxy-(6E,8Z,11Z,14Z)-eicosatetraenoyl-CoA + AMP + diphosphate. The catalysed reaction is 14,15-epoxy-(5Z,8Z,11Z)-eicosatrienoate + ATP + CoA = 14,15-epoxy-(5Z,8Z,11Z)-eicosatrienoyl-CoA + AMP + diphosphate. It catalyses the reaction 11,12-epoxy-(5Z,8Z,14Z)-eicosatrienoate + ATP + CoA = 11,12-epoxy-(5Z,8Z,14Z)-eicosatrienoyl-CoA + AMP + diphosphate. It carries out the reaction a medium-chain fatty acid + ATP + CoA = a medium-chain fatty acyl-CoA + AMP + diphosphate. The enzyme catalyses hexadecanoate + ATP + CoA = hexadecanoyl-CoA + AMP + diphosphate. The catalysed reaction is tetradecanoate + ATP + CoA = tetradecanoyl-CoA + AMP + diphosphate. It catalyses the reaction dodecanoate + ATP + CoA = dodecanoyl-CoA + AMP + diphosphate. It carries out the reaction octadecanoate + ATP + CoA = octadecanoyl-CoA + AMP + diphosphate. The enzyme catalyses eicosanoate + ATP + CoA = eicosanoyl-CoA + AMP + diphosphate. The catalysed reaction is (9Z)-octadecenoate + ATP + CoA = (9Z)-octadecenoyl-CoA + AMP + diphosphate. It catalyses the reaction (9Z)-hexadecenoate + ATP + CoA = (9Z)-hexadecenoyl-CoA + AMP + diphosphate. It carries out the reaction (9Z,12Z)-octadecadienoate + ATP + CoA = (9Z,12Z)-octadecadienoyl-CoA + AMP + diphosphate. The enzyme catalyses (9Z,12Z,15Z)-octadecatrienoate + ATP + CoA = (9Z,12Z,15Z)-octadecatrienoyl-CoA + AMP + diphosphate. The catalysed reaction is (4Z,7Z,10Z,13Z,16Z,19Z)-docosahexaenoate + ATP + CoA = (4Z,7Z,10Z,13Z,16Z,19Z)-docosahexaenoyl-CoA + AMP + diphosphate. It catalyses the reaction (5Z,8Z,11Z,14Z,17Z)-eicosapentaenoate + ATP + CoA = (5Z,8Z,11Z,14Z,17Z)-eicosapentaenoyl-CoA + AMP + diphosphate. It carries out the reaction a fatty acid + ATP + CoA = a fatty acyl-CoA + AMP + diphosphate. Its function is as follows. Acyl-CoA synthetases (ACSL) activates long-chain fatty acids for both synthesis of cellular lipids, and degradation via beta-oxidation. Required for the incorporation of fatty acids into phosphatidylcholine, the major phospholipid located on the surface of VLDL (very low density lipoproteins). Has mainly an anabolic role in energy metabolism. Mediates hepatic lipogenesis. Preferentially uses myristate, laurate, arachidonate and eicosapentaenoate as substrates. Both isoforms exhibit the same level of activity. This chain is Fatty acid CoA ligase Acsl3, found in Homo sapiens (Human).